A 201-amino-acid polypeptide reads, in one-letter code: 3-isopropylmalate dehydratase small subunit (201 aa).

This sequence belongs to the LeuD family. LeuD type 1 subfamily. As to quaternary structure, heterodimer of LeuC and LeuD.

The catalysed reaction is (2R,3S)-3-isopropylmalate = (2S)-2-isopropylmalate. The protein operates within amino-acid biosynthesis; L-leucine biosynthesis; L-leucine from 3-methyl-2-oxobutanoate: step 2/4. Functionally, catalyzes the isomerization between 2-isopropylmalate and 3-isopropylmalate, via the formation of 2-isopropylmaleate. The chain is 3-isopropylmalate dehydratase small subunit from Micrococcus luteus (strain ATCC 4698 / DSM 20030 / JCM 1464 / CCM 169 / CCUG 5858 / IAM 1056 / NBRC 3333 / NCIMB 9278 / NCTC 2665 / VKM Ac-2230) (Micrococcus lysodeikticus).